The following is a 115-amino-acid chain: Na(+)/H(+) antiporter subunit C1 (115 aa).

The next 3 membrane-spanning stretches (helical) occupy residues Met-1 to Leu-21, Ile-28 to Gly-48, and Leu-72 to Phe-92.

It belongs to the CPA3 antiporters (TC 2.A.63) subunit C family. In terms of assembly, may form a heterooligomeric complex that consists of seven subunits: mnhA1, mnhB1, mnhC1, mnhD1, mnhE1, mnhF1 and mnhG1.

The protein resides in the cell membrane. In terms of biological role, mnh complex is a Na(+)/H(+) antiporter involved in Na(+) excretion. This chain is Na(+)/H(+) antiporter subunit C1 (mnhC1), found in Staphylococcus saprophyticus subsp. saprophyticus (strain ATCC 15305 / DSM 20229 / NCIMB 8711 / NCTC 7292 / S-41).